A 334-amino-acid chain; its full sequence is Spermidine synthase 1 (334 aa).

Residues methionine 1–asparagine 37 are disordered. A compositionally biased stretch (polar residues) spans valine 26–asparagine 37. Residues proline 44–threonine 281 form the PABS domain. An S-adenosyl 3-(methylsulfanyl)propylamine-binding site is contributed by glutamine 75. A putrescine-binding site is contributed by tyrosine 105. S-adenosyl 3-(methylsulfanyl)propylamine-binding positions include glutamine 106, aspartate 130, glutamate 150, aspartate 181–glycine 182, and aspartate 200. Aspartate 200 serves as the catalytic Proton acceptor. Residues aspartate 200–aspartate 203 and tyrosine 269 each bind putrescine.

This sequence belongs to the spermidine/spermine synthase family.

It carries out the reaction S-adenosyl 3-(methylsulfanyl)propylamine + putrescine = S-methyl-5'-thioadenosine + spermidine + H(+). Its pathway is amine and polyamine biosynthesis; spermidine biosynthesis; spermidine from putrescine: step 1/1. In Pisum sativum (Garden pea), this protein is Spermidine synthase 1 (SPDSYN1).